The primary structure comprises 180 residues: MRILGIDPGLRVTGFGVIDQSGHTLSYVASGVIKTADADLPSRLGTIFEGISTLIRQHSPDQSAIEKVFVNVNPQSTLLLGQARGAAICGLVAGGVPVAEYTALQLKQAVVGYGRATKEQMQQMVVRLLNLSGVPGTDAADALGMAICHAHGGTTLSTLGGIAPSLAKKGLRVRRGRLVG.

Residues D7, E66, and D138 contribute to the active site. Positions 7, 66, and 138 each coordinate Mg(2+).

The protein belongs to the RuvC family. As to quaternary structure, homodimer which binds Holliday junction (HJ) DNA. The HJ becomes 2-fold symmetrical on binding to RuvC with unstacked arms; it has a different conformation from HJ DNA in complex with RuvA. In the full resolvosome a probable DNA-RuvA(4)-RuvB(12)-RuvC(2) complex forms which resolves the HJ. It depends on Mg(2+) as a cofactor.

The protein localises to the cytoplasm. The enzyme catalyses Endonucleolytic cleavage at a junction such as a reciprocal single-stranded crossover between two homologous DNA duplexes (Holliday junction).. The RuvA-RuvB-RuvC complex processes Holliday junction (HJ) DNA during genetic recombination and DNA repair. Endonuclease that resolves HJ intermediates. Cleaves cruciform DNA by making single-stranded nicks across the HJ at symmetrical positions within the homologous arms, yielding a 5'-phosphate and a 3'-hydroxyl group; requires a central core of homology in the junction. The consensus cleavage sequence is 5'-(A/T)TT(C/G)-3'. Cleavage occurs on the 3'-side of the TT dinucleotide at the point of strand exchange. HJ branch migration catalyzed by RuvA-RuvB allows RuvC to scan DNA until it finds its consensus sequence, where it cleaves and resolves the cruciform DNA. This chain is Crossover junction endodeoxyribonuclease RuvC, found in Paraburkholderia xenovorans (strain LB400).